We begin with the raw amino-acid sequence, 99 residues long: Putative regulatory protein Kole_1849 (99 aa).

This sequence belongs to the RemA family.

The sequence is that of Putative regulatory protein Kole_1849 from Kosmotoga olearia (strain ATCC BAA-1733 / DSM 21960 / TBF 19.5.1).